A 335-amino-acid polypeptide reads, in one-letter code: Phosphatidylcholine-sterol acyltransferase (335 aa).

An N-terminal signal peptide occupies residues 1-18; sequence MKKWFVCLLGLVALTVQA. S34 serves as the catalytic Nucleophile. Residues D306 and H309 contribute to the active site.

Belongs to the 'GDSL' lipolytic enzyme family.

It catalyses the reaction a sterol + a 1,2-diacyl-sn-glycero-3-phosphocholine = a sterol ester + a 1-acyl-sn-glycero-3-phosphocholine. In terms of biological role, fatty acid transfer between phosphatidylcholine and cholesterol. This chain is Phosphatidylcholine-sterol acyltransferase, found in Aeromonas hydrophila.